We begin with the raw amino-acid sequence, 293 residues long: MTSALHESSIKSLPLLGRGKVRDMYAVGDDKLLIVASDRISAFDVILDDPIPGKGQVLTELTDFWLRKLAHILPNHSTGIQPEDVVAPDEVDQVRGRAVVVKRLKPILVEAVARGYLIGSGWKDYQASGSVCGIALPAGLQQASQLPEPIFTPAAKAEFGMHDENVDFAHVVKEVGQEMAERIRDVTLRLYGEAARFAATKGIIIADTKFEFGLDDNGTLHLMDEVLTPDSSRFWPADGYRVGISPPSFDKQFVRDWLETQPWDKTPPAPRLPRDVLEKTAAKYREALDRLLA.

The protein belongs to the SAICAR synthetase family.

It carries out the reaction 5-amino-1-(5-phospho-D-ribosyl)imidazole-4-carboxylate + L-aspartate + ATP = (2S)-2-[5-amino-1-(5-phospho-beta-D-ribosyl)imidazole-4-carboxamido]succinate + ADP + phosphate + 2 H(+). It functions in the pathway purine metabolism; IMP biosynthesis via de novo pathway; 5-amino-1-(5-phospho-D-ribosyl)imidazole-4-carboxamide from 5-amino-1-(5-phospho-D-ribosyl)imidazole-4-carboxylate: step 1/2. This is Phosphoribosylaminoimidazole-succinocarboxamide synthase from Bordetella parapertussis (strain 12822 / ATCC BAA-587 / NCTC 13253).